Consider the following 931-residue polypeptide: Netrin receptor UNC5C (931 aa).

Residues M1–A40 form the signal peptide. The Extracellular segment spans residues Q41–Y380. The 98-residue stretch at P62 to Y159 folds into the Ig-like domain. 9 disulfides stabilise this stretch: C83/C144, C95/C142, C188/C239, C272/C309, C276/C313, C287/C299, C328/C362, C332/C367, and C340/C352. The Ig-like C2-type domain maps to R161 to I256. N236 carries an N-linked (GlcNAc...) asparagine glycan. TSP type-1 domains lie at N260–P314 and D316–M368. N361 is a glycosylation site (N-linked (GlcNAc...) asparagine). The helical transmembrane segment at V381–V401 threads the bilayer. Residues Y402 to Y931 lie on the Cytoplasmic side of the membrane. Positions Y402–Y931 are required for netrin-mediated axon repulsion of neuronal growth cones. S502 carries the post-translational modification Phosphoserine. The region spanning C530–S673 is the ZU5 domain. Phosphotyrosine is present on Y568. Residues S694–K712 form an interaction with DCC region. In terms of domain architecture, Death spans Q850 to G929.

It belongs to the unc-5 family. In terms of assembly, interacts with DCC (via cytoplasmic domain). Interacts (tyrosine phosphorylated form) with PTPN11. Interacts (via extracellular domain) with FLRT3 (via extracellular domain). Interacts (via Ig-like C2-type domain) with DSCAM (via extracellular domain). Interacts (via death domain) with DAPK1. Interacts (via cytoplasmic domain) with TUBB3; this interaction is decreased by NTN1/Netrin-1. In terms of processing, phosphorylated on different cytoplasmic tyrosine residues. Phosphorylation of Tyr-568 leads to an interaction with PTPN11 phosphatase, suggesting that its activity is regulated by phosphorylation/dephosphorylation. Tyrosine phosphorylation is netrin-dependent. Proteolytically cleaved by caspases during apoptosis. The cleavage does not take place when the receptor is associated with netrin ligand. Its cleavage by caspases is required to induce apoptosis. As to expression, expressed in cortical and cerebellar neurons, including cells of the external and internal granular layer and of the Purkinje cell layer (at protein level). Mainly expressed in regions of differentiating neurons. Highly expressed in brain and lung. Expressed in the cerebellum and the neurons of the hippocampus, with enrichment in neurons of the CA3 hippocampal pyramidal layer. Weakly expressed in testis, ovary, spleen, thymus and bladder. Expressed at very low level in kidney, intestine and salivary gland.

The protein localises to the cell membrane. It localises to the cell surface. The protein resides in the synapse. It is found in the synaptosome. Its subcellular location is the cell projection. The protein localises to the dendrite. It localises to the axon. The protein resides in the growth cone. It is found in the lamellipodium. Its subcellular location is the filopodium. In terms of biological role, receptor for netrin required for axon guidance. Mediates axon repulsion of neuronal growth cones in the developing nervous system upon ligand binding. NTN1/Netrin-1 binding might cause dissociation of UNC5C from polymerized TUBB3 in microtubules and thereby lead to increased microtubule dynamics and axon repulsion. Axon repulsion in growth cones may also be caused by its association with DCC that may trigger signaling for repulsion. Might also collaborate with DSCAM in NTN1-mediated axon repulsion independently of DCC. Also involved in corticospinal tract axon guidance independently of DCC. Involved in dorsal root ganglion axon projection towards the spinal cord. It also acts as a dependence receptor required for apoptosis induction when not associated with netrin ligand. The sequence is that of Netrin receptor UNC5C (Unc5c) from Mus musculus (Mouse).